The chain runs to 165 residues: MELCRSLALLGGSLGLMFCLIALSTDFWFEAVGPTHSAHSGLWPTGHGDIISGYIHVTQTFSIMAVLWALVSVSFLVLSCFPSLFPPGHGPLVSTTAAFAAAISMVVAMAVYTSERWDQPPHPQIQTFFSWSFYLGWVSAILLLCTGALSLGAHCGGPRPGYETL.

4 helical membrane passes run 9-29 (LLGG…DFWF), 61-81 (FSIM…LSCF), 92-112 (LVST…MAVY), and 133-153 (FYLG…SLGA).

Belongs to the PMP-22/EMP/MP20 family. Expressed in activated T-cells, in kidney, liver, lung and pancreas. Not expressed in brain, heart, or skeletal muscle. Expressed at high levels in TCR gamma delta-expressing CTL clones, and in some TCR alpha beta-expressing CTL clones (both CD4+ and CD8+), but is not expressed in other TCR alpha beta-expressing CTL clones and in cell lines representing B-cells, monocytes, and myeloid cells.

The protein resides in the cell membrane. Its subcellular location is the cytolytic granule membrane. Regulates cytotoxic granule exocytosis in effector lymphocytes, thus acting as a critical mediator of inflammation in a broad range of infectious and non-infectious diseases. Essential for cytotoxic degranulation of natural killer (NK) cells and CD8(+) T-cells and for the activation of CD4(+) T-cells following infection. Plays a critical role in CD8(+) T-cell and NK cell-mediated cytolysis of target cells and contributes to the cytolytic activity via the perforin/granzyme pathway by enhancing exocytosis of LAMP1-carrying lytic granules. Contributes to NK cell-mediated control of cancer metastasis. The chain is Protein NKG7 (NKG7) from Homo sapiens (Human).